The following is a 415-amino-acid chain: Ribulose bisphosphate carboxylase large chain (415 aa).

Substrate is bound by residues Asn101 and Thr151. The active-site Proton acceptor is Lys153. Substrate is bound at residue Lys155. Mg(2+) is bound by residues Lys179, Asp181, and Glu182. Lys179 bears the N6-carboxylysine mark. The active-site Proton acceptor is His272. Substrate contacts are provided by Arg273, His305, and Ser357.

The protein belongs to the RuBisCO large chain family. Type I subfamily. Heterohexadecamer of 8 large chains and 8 small chains; disulfide-linked. The disulfide link is formed within the large subunit homodimers. Requires Mg(2+) as cofactor. Post-translationally, the disulfide bond which can form in the large chain dimeric partners within the hexadecamer appears to be associated with oxidative stress and protein turnover.

The protein resides in the plastid. The protein localises to the chloroplast. The catalysed reaction is 2 (2R)-3-phosphoglycerate + 2 H(+) = D-ribulose 1,5-bisphosphate + CO2 + H2O. It catalyses the reaction D-ribulose 1,5-bisphosphate + O2 = 2-phosphoglycolate + (2R)-3-phosphoglycerate + 2 H(+). RuBisCO catalyzes two reactions: the carboxylation of D-ribulose 1,5-bisphosphate, the primary event in carbon dioxide fixation, as well as the oxidative fragmentation of the pentose substrate in the photorespiration process. Both reactions occur simultaneously and in competition at the same active site. The polypeptide is Ribulose bisphosphate carboxylase large chain (Cibotium barometz (Scythian lamb)).